Reading from the N-terminus, the 229-residue chain is Heptaprenylglyceryl phosphate synthase (229 aa).

K12 contributes to the sn-glycerol 1-phosphate binding site. Mg(2+) contacts are provided by D14 and S40. Residues 159–164, G189, and 209–210 each bind sn-glycerol 1-phosphate; these read YLEYSG and GN.

It belongs to the GGGP/HepGP synthase family. Group I subfamily. Homodimer. The cofactor is Mg(2+).

The catalysed reaction is sn-glycerol 1-phosphate + all-trans-heptaprenyl diphosphate = 3-heptaprenyl-sn-glycero-1-phosphate + diphosphate. It participates in membrane lipid metabolism; glycerophospholipid metabolism. Prenyltransferase that catalyzes in vivo the transfer of the heptaprenyl moiety of heptaprenyl pyrophosphate (HepPP; 35 carbon atoms) to the C3 hydroxyl of sn-glycerol-1-phosphate (G1P), producing heptaprenylglyceryl phosphate (HepGP). This reaction is an ether-bond-formation step in the biosynthesis of archaea-type G1P-based membrane lipids found in Bacillales. This Bacillus cereus (strain B4264) protein is Heptaprenylglyceryl phosphate synthase.